The chain runs to 1155 residues: DNA-directed RNA polymerase subunit beta (1155 aa).

Belongs to the RNA polymerase beta chain family. In terms of assembly, the RNAP catalytic core consists of 2 alpha, 1 beta, 1 beta' and 1 omega subunit. When a sigma factor is associated with the core the holoenzyme is formed, which can initiate transcription.

The catalysed reaction is RNA(n) + a ribonucleoside 5'-triphosphate = RNA(n+1) + diphosphate. Its function is as follows. DNA-dependent RNA polymerase catalyzes the transcription of DNA into RNA using the four ribonucleoside triphosphates as substrates. This chain is DNA-directed RNA polymerase subunit beta, found in Borrelia recurrentis (strain A1).